A 351-amino-acid polypeptide reads, in one-letter code: Alanine racemase (351 aa).

Lysine 35 acts as the Proton acceptor; specific for D-alanine in catalysis. Position 35 is an N6-(pyridoxal phosphate)lysine (lysine 35). Residue arginine 127 coordinates substrate. Catalysis depends on tyrosine 247, which acts as the Proton acceptor; specific for L-alanine. Methionine 295 serves as a coordination point for substrate.

Belongs to the alanine racemase family. Pyridoxal 5'-phosphate is required as a cofactor.

The catalysed reaction is L-alanine = D-alanine. Its pathway is amino-acid biosynthesis; D-alanine biosynthesis; D-alanine from L-alanine: step 1/1. In terms of biological role, catalyzes the interconversion of L-alanine and D-alanine. May also act on other amino acids. The polypeptide is Alanine racemase (alr) (Vesicomyosocius okutanii subsp. Calyptogena okutanii (strain HA)).